Reading from the N-terminus, the 155-residue chain is 3-hydroxyacyl-[acyl-carrier-protein] dehydratase FabZ (155 aa).

Histidine 58 is an active-site residue.

The protein belongs to the thioester dehydratase family. FabZ subfamily.

It is found in the cytoplasm. The catalysed reaction is a (3R)-hydroxyacyl-[ACP] = a (2E)-enoyl-[ACP] + H2O. Involved in unsaturated fatty acids biosynthesis. Catalyzes the dehydration of short chain beta-hydroxyacyl-ACPs and long chain saturated and unsaturated beta-hydroxyacyl-ACPs. The sequence is that of 3-hydroxyacyl-[acyl-carrier-protein] dehydratase FabZ from Alkalilimnicola ehrlichii (strain ATCC BAA-1101 / DSM 17681 / MLHE-1).